A 334-amino-acid chain; its full sequence is Protein-methionine-sulfoxide reductase catalytic subunit MsrP (334 aa).

Residues methionine 1–alanine 44 constitute a signal peptide (tat-type signal). Residues asparagine 88, tyrosine 91–glutamate 92, cysteine 146, threonine 181, asparagine 233, arginine 238, and glycine 249–lysine 251 each bind Mo-molybdopterin.

The protein belongs to the MsrP family. As to quaternary structure, heterodimer of a catalytic subunit (MsrP) and a heme-binding subunit (MsrQ). The cofactor is Mo-molybdopterin. Post-translationally, predicted to be exported by the Tat system. The position of the signal peptide cleavage has not been experimentally proven.

Its subcellular location is the periplasm. It catalyses the reaction L-methionyl-[protein] + a quinone + H2O = L-methionyl-(S)-S-oxide-[protein] + a quinol. It carries out the reaction L-methionyl-[protein] + a quinone + H2O = L-methionyl-(R)-S-oxide-[protein] + a quinol. Functionally, part of the MsrPQ system that repairs oxidized periplasmic proteins containing methionine sulfoxide residues (Met-O), using respiratory chain electrons. Thus protects these proteins from oxidative-stress damage caused by reactive species of oxygen and chlorine generated by the host defense mechanisms. MsrPQ is essential for the maintenance of envelope integrity under bleach stress, rescuing a wide series of structurally unrelated periplasmic proteins from methionine oxidation, including the primary periplasmic chaperone SurA and the lipoprotein Pal. The catalytic subunit MsrP is non-stereospecific, being able to reduce both (R-) and (S-) diastereoisomers of methionine sulfoxide. This chain is Protein-methionine-sulfoxide reductase catalytic subunit MsrP, found in Salmonella newport (strain SL254).